Reading from the N-terminus, the 1000-residue chain is SEC23-interacting protein (1000 aa).

The tract at residues 1-367 (MAERKPNGGS…YTEEFSEKLE (367 aa)) is interaction with SEC23A. Positions 133 to 252 (FSPSISKAQP…QQVPARPGAP (120 aa)) are disordered. Positions 154-167 (SYLPSQPSSLPPSY) are enriched in low complexity. The span at 207-218 (PGPPAHPPPSGP) shows a compositional bias: pro residues. Positions 235 to 246 (SSVQSPAQQQVP) are enriched in low complexity. The 64-residue stretch at 644 to 707 (KEVLTLQETL…NFVEHKAAKL (64 aa)) folds into the SAM domain. Residues 716-748 (AVAATSTKGQEQSAQKTKDMASLPSESNEPKRK) form a disordered region. Residues Ser-737 and Ser-926 each carry the phosphoserine modification. The 211-residue stretch at 779-989 (LDFEPEIFFA…ALLLLKEIYR (211 aa)) folds into the DDHD domain.

Belongs to the PA-PLA1 family. As to quaternary structure, interacts with SEC23A. Ubiquitously expressed with stronger levels detected in heart, liver and skeletal muscle.

It localises to the cytoplasmic vesicle. The protein localises to the COPII-coated vesicle membrane. Its subcellular location is the endoplasmic reticulum. Its function is as follows. Plays a role in the organization of endoplasmic reticulum exit sites. Specifically binds to phosphatidylinositol 3-phosphate (PI(3)P), phosphatidylinositol 4-phosphate (PI(4)P) and phosphatidylinositol 5-phosphate (PI(5)P). This chain is SEC23-interacting protein (SEC23IP), found in Homo sapiens (Human).